A 430-amino-acid polypeptide reads, in one-letter code: Protein trichome birefringence-like 24 (430 aa).

A helical; Signal-anchor for type II membrane protein membrane pass occupies residues 15–35 (VLLIKLISAILISFFAFRLFI). The GDS motif motif lies at 153 to 155 (GDS). Positions 406-420 (DCLHWCLPGPFDYLN) match the DCXHWCLPGXXDXWN motif motif.

The protein belongs to the PC-esterase family. TBL subfamily.

It is found in the membrane. Functionally, may act as a bridging protein that binds pectin and other cell wall polysaccharides. Probably involved in maintaining esterification of pectins. May be involved in the specific O-acetylation of cell wall polymers. The protein is Protein trichome birefringence-like 24 (TBL24) of Arabidopsis thaliana (Mouse-ear cress).